A 112-amino-acid chain; its full sequence is Large ribosomal subunit protein uL22 (112 aa).

It belongs to the universal ribosomal protein uL22 family. As to quaternary structure, part of the 50S ribosomal subunit.

Its function is as follows. This protein binds specifically to 23S rRNA; its binding is stimulated by other ribosomal proteins, e.g. L4, L17, and L20. It is important during the early stages of 50S assembly. It makes multiple contacts with different domains of the 23S rRNA in the assembled 50S subunit and ribosome. The globular domain of the protein is located near the polypeptide exit tunnel on the outside of the subunit, while an extended beta-hairpin is found that lines the wall of the exit tunnel in the center of the 70S ribosome. The chain is Large ribosomal subunit protein uL22 from Mesoplasma florum (strain ATCC 33453 / NBRC 100688 / NCTC 11704 / L1) (Acholeplasma florum).